The primary structure comprises 240 residues: UDP-2,3-diacylglucosamine hydrolase (240 aa).

Positions 8, 10, 41, 79, and 114 each coordinate Mn(2+). 79–80 (NR) contributes to the substrate binding site. Substrate contacts are provided by D122, S160, N164, K167, and H195. Mn(2+) is bound by residues H195 and H197.

This sequence belongs to the LpxH family. It depends on Mn(2+) as a cofactor.

The protein resides in the cell inner membrane. The enzyme catalyses UDP-2-N,3-O-bis[(3R)-3-hydroxytetradecanoyl]-alpha-D-glucosamine + H2O = 2-N,3-O-bis[(3R)-3-hydroxytetradecanoyl]-alpha-D-glucosaminyl 1-phosphate + UMP + 2 H(+). It functions in the pathway glycolipid biosynthesis; lipid IV(A) biosynthesis; lipid IV(A) from (3R)-3-hydroxytetradecanoyl-[acyl-carrier-protein] and UDP-N-acetyl-alpha-D-glucosamine: step 4/6. Hydrolyzes the pyrophosphate bond of UDP-2,3-diacylglucosamine to yield 2,3-diacylglucosamine 1-phosphate (lipid X) and UMP by catalyzing the attack of water at the alpha-P atom. Involved in the biosynthesis of lipid A, a phosphorylated glycolipid that anchors the lipopolysaccharide to the outer membrane of the cell. The protein is UDP-2,3-diacylglucosamine hydrolase of Salmonella dublin (strain CT_02021853).